The sequence spans 236 residues: Ribonuclease 3 (236 aa).

The 123-residue stretch at 8-130 (FRRLSQALDY…TFAAVSFDAD (123 aa)) folds into the RNase III domain. Mg(2+) is bound at residue glutamate 43. Aspartate 47 is an active-site residue. The Mg(2+) site is built by aspartate 116 and glutamate 119. Glutamate 119 is a catalytic residue. In terms of domain architecture, DRBM spans 157 to 227 (DAKTRLQEAL…AEAALTLLEQ (71 aa)).

Belongs to the ribonuclease III family. As to quaternary structure, homodimer. Mg(2+) serves as cofactor.

Its subcellular location is the cytoplasm. It carries out the reaction Endonucleolytic cleavage to 5'-phosphomonoester.. Digests double-stranded RNA. Involved in the processing of primary rRNA transcript to yield the immediate precursors to the large and small rRNAs (23S and 16S). Processes some mRNAs, and tRNAs when they are encoded in the rRNA operon. Processes pre-crRNA and tracrRNA of type II CRISPR loci if present in the organism. The protein is Ribonuclease 3 of Chromobacterium violaceum (strain ATCC 12472 / DSM 30191 / JCM 1249 / CCUG 213 / NBRC 12614 / NCIMB 9131 / NCTC 9757 / MK).